Consider the following 337-residue polypeptide: NADH-quinone oxidoreductase subunit H (337 aa).

The next 8 membrane-spanning stretches (helical) occupy residues 13-33 (IIIV…IAYL), 82-102 (AVFI…WAVI), 115-135 (VGVL…IMAG), 154-174 (MVSY…SAGS), 187-207 (GVWY…SILA), 248-268 (ILMS…PVDI), 274-294 (IPGI…FLWV), and 313-333 (VFLP…VTFD).

The protein belongs to the complex I subunit 1 family. NDH-1 is composed of 14 different subunits. Subunits NuoA, H, J, K, L, M, N constitute the membrane sector of the complex.

It localises to the cell inner membrane. The catalysed reaction is a quinone + NADH + 5 H(+)(in) = a quinol + NAD(+) + 4 H(+)(out). NDH-1 shuttles electrons from NADH, via FMN and iron-sulfur (Fe-S) centers, to quinones in the respiratory chain. The immediate electron acceptor for the enzyme in this species is believed to be ubiquinone. Couples the redox reaction to proton translocation (for every two electrons transferred, four hydrogen ions are translocated across the cytoplasmic membrane), and thus conserves the redox energy in a proton gradient. This subunit may bind ubiquinone. In Rhodospirillum rubrum (strain ATCC 11170 / ATH 1.1.1 / DSM 467 / LMG 4362 / NCIMB 8255 / S1), this protein is NADH-quinone oxidoreductase subunit H.